Consider the following 1373-residue polypeptide: TAL effector protein PthXo1 (1373 aa).

2 disordered regions span residues 1–68 (MDPI…SAGS) and 127–152 (AARP…PAAQ). Residues 131-141 (PRAKPAPRRRA) show a composition bias toward basic residues. Residues 142 to 152 (AQPSDASPAAQ) are compositionally biased toward low complexity. A Cryptic repeat -1 repeat occupies 221–239 (THEDIVGVGKQWSGARALE). One copy of the Cryptic repeat 0 repeat lies at 256 to 273 (DTGQLVKIAKRGGVTAVE). 23 Core repeat repeats span residues 289 to 322 (LTPA…QAHG), 323 to 356 (LTPA…QAHG), 357 to 390 (LPPD…QAHG), 391 to 424 (LTPD…QAHG), 425 to 458 (LTPD…QAHG), 459 to 492 (LTPD…QAHG), 493 to 525 (LTPD…QAHG), 526 to 559 (LTPD…QTHG), 560 to 593 (LTPA…QAHG), 594 to 627 (LTPD…QAHG), 628 to 661 (LTPD…QAHG), 662 to 695 (LTPD…QAHG), 696 to 729 (LTQV…QAHG), 730 to 763 (LTPA…QAHG), 764 to 797 (LTPD…QAHG), 798 to 831 (LTQE…QAHG), 832 to 865 (LTPD…QAHG), 866 to 899 (LTPA…QDHG), 900 to 933 (LTLA…QAHG), 934 to 967 (LTQD…QDHG), 968 to 1001 (LTPD…QDHG), 1002 to 1034 (LTLD…QDHG), and 1035 to 1068 (LTPD…QDHG). HEAT repeat units follow at residues 714–760 (LETV…VLCQ), 782–828 (LETV…VLCQ), 850–893 (LETV…LLPV), and 918–961 (LETV…LLPV). Residues 1053-1091 (LETVQRLLPVLCQDHGLTPNQVVAIASNGGKQALESIVA) form an HEAT 5 repeat. The Core repeat 23.5 repeat unit spans residues 1069–1087 (LTPNQVVAIASNGGKQALE). Residues 1136-1364 (RVNRRIGERT…ELAWLMELLP (229 aa)) form an acidic activation domain region. The Nuclear localization signal NLS1 signature appears at 1222–1225 (KRAK). The tract at residues 1250 to 1286 (LDAPSPMHEGDQTGASSRKRSRSDRAVTGPSAQHSFE) is disordered. Positions 1268 to 1271 (KRSR) match the Nuclear localization signal NLS2 motif. A Nuclear localization signal NLS3 motif is present at residues 1305–1308 (KRPR).

The protein belongs to the transcription activator-like effector (TALE) family.

The protein localises to the secreted. Its subcellular location is the host nucleus. Its function is as follows. Avirulence protein. Acts as a transcription factor in rice, inducing expression of a number of host genes including SWEET11 (Os8N3, XA13, AC Q6YZF3) in susceptible plants with the Xa13 allele. Plants with the xa13 allele, which has an altered promoter, are resistant to bacterial blight caused by this bacterial strain and do not induce SWEET11. The xa13 allele elicits an atypical hypersensitive response (HR). PthXo1 binds SWEET11 promoter DNA in a sequence-specific manner. The sequence is that of TAL effector protein PthXo1 (pthXo1) from Xanthomonas oryzae pv. oryzae (strain PXO99A).